The primary structure comprises 697 residues: PHD finger protein At2g01810 (697 aa).

Disordered stretches follow at residues Asp-319–Ser-362 and Glu-457–Thr-478. Residues Ser-339 to Asn-349 show a composition bias toward basic and acidic residues. A PHD-type zinc finger spans residues Thr-635 to Asp-685.

It localises to the nucleus. The sequence is that of PHD finger protein At2g01810 from Arabidopsis thaliana (Mouse-ear cress).